The sequence spans 78 residues: Acyl carrier protein (78 aa).

Residues 4–78 (AEIKDKVYDI…QQAIDYIVKK (75 aa)) form the Carrier domain. Residue serine 39 is modified to O-(pantetheine 4'-phosphoryl)serine.

This sequence belongs to the acyl carrier protein (ACP) family. In terms of processing, 4'-phosphopantetheine is transferred from CoA to a specific serine of apo-ACP by AcpS. This modification is essential for activity because fatty acids are bound in thioester linkage to the sulfhydryl of the prosthetic group.

It is found in the cytoplasm. It functions in the pathway lipid metabolism; fatty acid biosynthesis. Functionally, carrier of the growing fatty acid chain in fatty acid biosynthesis. The protein is Acyl carrier protein of Chlorobium phaeovibrioides (strain DSM 265 / 1930) (Prosthecochloris vibrioformis (strain DSM 265)).